The chain runs to 522 residues: Cytochrome P450 4F4 (522 aa).

Helical transmembrane passes span 15–35 and 87–107; these read TSLPWLLLLLIGASWLLVRVL and GFMTWLGPILPIITLCHPDVI. Heme-binding residues include Glu-328 and Cys-468.

The protein belongs to the cytochrome P450 family. Heme is required as a cofactor. Expressed in hepatocytes. High expression in liver and kidney. Lower expression in brain.

The protein resides in the endoplasmic reticulum membrane. It localises to the microsome membrane. The catalysed reaction is (5Z,8Z,11Z,14Z)-eicosatetraenoate + reduced [NADPH--hemoprotein reductase] + O2 = 20-hydroxy-(5Z,8Z,11Z,14Z)-eicosatetraenoate + oxidized [NADPH--hemoprotein reductase] + H2O + H(+). The enzyme catalyses leukotriene B4 + reduced [NADPH--hemoprotein reductase] + O2 = 20-hydroxy-leukotriene B4 + oxidized [NADPH--hemoprotein reductase] + H2O + H(+). It catalyses the reaction 6-trans-leukotriene B4 + reduced [NADPH--hemoprotein reductase] + O2 = 20-hydroxy-6-trans-leukotriene B4 + oxidized [NADPH--hemoprotein reductase] + H2O + H(+). It carries out the reaction prostaglandin A1 + reduced [NADPH--hemoprotein reductase] + O2 = 20-hydroxy prostaglandin A1 + oxidized [NADPH--hemoprotein reductase] + H2O + H(+). The catalysed reaction is prostaglandin E1 + reduced [NADPH--hemoprotein reductase] + O2 = 20-hydroxy prostaglandin E1 + oxidized [NADPH--hemoprotein reductase] + H2O + H(+). A cytochrome P450 monooxygenase involved in the metabolism of arachidonic acid and its oxygenated derivatives. Mechanistically, uses molecular oxygen inserting one oxygen atom into a substrate, and reducing the second into a water molecule, with two electrons provided by NADPH via cytochrome P450 reductase (CPR; NADPH-ferrihemoprotein reductase). Participates in the conversion of arachidonic acid to omega-hydroxyeicosatetraenoic acid (20-HETE), a signaling molecule acting both as vasoconstrictive and natriuretic with overall effect on arterial blood pressure. Hydroxylates the terminal carbon (omega-hydroxylation) of inflammatory lipid mediators, including prostaglandin (PG) A1, PGE1 and leukotriene B4 (LTB4), and may play a role in inactivation of these oxylipins during the resolution of inflammation. This Rattus norvegicus (Rat) protein is Cytochrome P450 4F4.